The following is a 289-amino-acid chain: tRNA pseudouridine synthase B (289 aa).

Asp38 (nucleophile) is an active-site residue.

The protein belongs to the pseudouridine synthase TruB family. Type 1 subfamily.

It catalyses the reaction uridine(55) in tRNA = pseudouridine(55) in tRNA. In terms of biological role, responsible for synthesis of pseudouridine from uracil-55 in the psi GC loop of transfer RNAs. The polypeptide is tRNA pseudouridine synthase B (Clostridium acetobutylicum (strain ATCC 824 / DSM 792 / JCM 1419 / IAM 19013 / LMG 5710 / NBRC 13948 / NRRL B-527 / VKM B-1787 / 2291 / W)).